Consider the following 134-residue polypeptide: Beta-synuclein (134 aa).

2 tandem repeats follow at residues 20–30 (EKTKQGVTEAA) and 31–41 (EKTKEGVLYVG). The interval 20-67 (EKTKQGVTEAAEKTKEGVLYVGSKTREGVVQGVASVAEKTKEQASHLG) is 4 X 11 AA tandem repeats of [EGS]-K-T-K-[EQ]-[GQ]-V-X(4). The 3; approximate repeat unit spans residues 42–56 (SKTREGVVQGVASVA). The stretch at 57-67 (EKTKEQASHLG) is repeat 4. A disordered region spans residues 89–134 (FPTDLKPEEVAQEAAEEPLIEPLMEPEGESYEDPPQEEYQEYEPEA). The segment covering 98 to 134 (VAQEAAEEPLIEPLMEPEGESYEDPPQEEYQEYEPEA) has biased composition (acidic residues). Ser-118 is modified (phosphoserine; by BARK1, CK2 and GRK5).

The protein belongs to the synuclein family. In terms of processing, phosphorylated. Phosphorylation by G-protein coupled receptor kinases (GRK) is more efficient than phosphorylation by CK1, CK2 and CaM-kinase II. As to expression, expressed predominantly in brain; concentrated in presynaptic nerve terminals.

Its subcellular location is the cytoplasm. Its function is as follows. Non-amyloid component of senile plaques found in Alzheimer disease. Could act as a regulator of SNCA aggregation process. Protects neurons from staurosporine and 6-hydroxy dopamine (6OHDA)-stimulated caspase activation in a p53/TP53-dependent manner. Contributes to restore the SNCA anti-apoptotic function abolished by 6OHDA. Not found in the Lewy bodies associated with Parkinson disease. The sequence is that of Beta-synuclein (SNCB) from Homo sapiens (Human).